A 119-amino-acid chain; its full sequence is ATP-dependent Clp protease adapter protein ClpS (119 aa).

The interval 1 to 24 (MGPESPDSIPPHGPGNGDGDQDLD) is disordered.

It belongs to the ClpS family. Binds to the N-terminal domain of the chaperone ClpA.

Involved in the modulation of the specificity of the ClpAP-mediated ATP-dependent protein degradation. The chain is ATP-dependent Clp protease adapter protein ClpS from Gluconobacter oxydans (strain 621H) (Gluconobacter suboxydans).